The sequence spans 509 residues: Sorting nexin MVP1 (509 aa).

A compositionally biased stretch (polar residues) spans 1–25 (MDTYSGQNGWADTSNASPWGDTNDT). Residues 1–28 (MDTYSGQNGWADTSNASPWGDTNDTMPI) are disordered. The region spanning 126 to 245 (QLDIISIEEI…TFLTVPTDLT (120 aa)) is the PX domain. Positions 170, 172, 196, and 211 each coordinate a 1,2-diacyl-sn-glycero-3-phospho-(1D-myo-inositol-3-phosphate).

Belongs to the sorting nexin family.

The protein localises to the cytoplasm. Its subcellular location is the membrane. In terms of biological role, required for vacuolar protein sorting. This chain is Sorting nexin MVP1 (MVP1), found in Candida glabrata (strain ATCC 2001 / BCRC 20586 / JCM 3761 / NBRC 0622 / NRRL Y-65 / CBS 138) (Yeast).